The primary structure comprises 149 residues: MQIWVDADACPKVVKEVLFRAATRTGIKLTLVANHYIPVPSAANIRSMQVEAGFDVADDEIVKRSEAGDLVISADIPLAAELIEKKVQVLNPRGELYTEATIKARLNIRDFMDTMRASGIQTGGPAPLSQTERREFANQLDRILAKAKI.

It belongs to the UPF0178 family.

The polypeptide is UPF0178 protein VFMJ11_0615 (Aliivibrio fischeri (strain MJ11) (Vibrio fischeri)).